We begin with the raw amino-acid sequence, 137 residues long: Small ribosomal subunit protein uS11 (137 aa).

The span at 1-10 (MPPKSRSTGP) shows a compositional bias: polar residues. Disordered regions lie at residues 1–27 (MPPK…IPHG) and 116–137 (GTIS…RRRV). Basic residues predominate over residues 12 to 21 (KTQKTRRRDK).

The protein belongs to the universal ribosomal protein uS11 family. Part of the 30S ribosomal subunit. Interacts with proteins S7 and S18. Binds to IF-3.

In terms of biological role, located on the platform of the 30S subunit, it bridges several disparate RNA helices of the 16S rRNA. Forms part of the Shine-Dalgarno cleft in the 70S ribosome. This chain is Small ribosomal subunit protein uS11, found in Rhodococcus erythropolis (strain PR4 / NBRC 100887).